Consider the following 281-residue polypeptide: 3-mercaptopyruvate sulfurtransferase (281 aa).

2 consecutive Rhodanese domains span residues 17–135 (DDPE…LLEE) and 165–278 (HENT…LPVE). Substrate is bound at residue R179. Catalysis depends on C238, which acts as the Cysteine persulfide intermediate. The substrate specificity stretch occupies residues 238 to 244 (CGSGVTA).

It localises to the cytoplasm. It catalyses the reaction 2-oxo-3-sulfanylpropanoate + [thioredoxin]-dithiol = [thioredoxin]-disulfide + hydrogen sulfide + pyruvate + H(+). Its function is as follows. Catalyzes the transfer of sulfur from 3-mercaptopyruvate to a thiol-containing acceptor to form an intramolecular disulfide releasing hydrogen sulfide and pyruvate. This chain is 3-mercaptopyruvate sulfurtransferase (sseA), found in Escherichia coli O157:H7.